The chain runs to 282 residues: NADPH-dependent 7-cyano-7-deazaguanine reductase (282 aa).

A substrate-binding site is contributed by 88-90 (IES). Position 90–91 (90–91 (SK)) interacts with NADPH. The Thioimide intermediate role is filled by cysteine 190. Aspartate 197 functions as the Proton donor in the catalytic mechanism. Position 229-230 (229-230 (HE)) interacts with substrate. 258 to 259 (RG) is an NADPH binding site.

Belongs to the GTP cyclohydrolase I family. QueF type 2 subfamily. Homodimer.

The protein resides in the cytoplasm. It carries out the reaction 7-aminomethyl-7-carbaguanine + 2 NADP(+) = 7-cyano-7-deazaguanine + 2 NADPH + 3 H(+). It participates in tRNA modification; tRNA-queuosine biosynthesis. Functionally, catalyzes the NADPH-dependent reduction of 7-cyano-7-deazaguanine (preQ0) to 7-aminomethyl-7-deazaguanine (preQ1). In Escherichia coli O157:H7, this protein is NADPH-dependent 7-cyano-7-deazaguanine reductase.